Consider the following 115-residue polypeptide: NADH-ubiquinone oxidoreductase chain 3 (115 aa).

The next 3 membrane-spanning stretches (helical) occupy residues 5–25 (TALLVNITLSMLLIIVAFWFF), 55–75 (FFLVAITFLLFDLEIALLLPL), and 86–106 (IMMLTAFILISVLALGLAYEW).

The protein belongs to the complex I subunit 3 family. In terms of assembly, core subunit of respiratory chain NADH dehydrogenase (Complex I) which is composed of 45 different subunits. Interacts with TMEM186. Interacts with TMEM242.

Its subcellular location is the mitochondrion inner membrane. The catalysed reaction is a ubiquinone + NADH + 5 H(+)(in) = a ubiquinol + NAD(+) + 4 H(+)(out). Its function is as follows. Core subunit of the mitochondrial membrane respiratory chain NADH dehydrogenase (Complex I) which catalyzes electron transfer from NADH through the respiratory chain, using ubiquinone as an electron acceptor. Essential for the catalytic activity of complex I. This Peromyscus sejugis (Santa Cruz mouse) protein is NADH-ubiquinone oxidoreductase chain 3.